Consider the following 768-residue polypeptide: U-box domain-containing protein 45 (768 aa).

The U-box domain occupies 278 to 352 (VPPEELRCPI…SSWCEQNGVQ (75 aa)). ARM repeat units lie at residues 454-497 (EEAR…NLAV), 500-540 (NRNK…CLEE), 542-579 (KPVI…HLST), 581-620 (PPNI…NLVL), and 623-662 (AGKD…ILCN).

In terms of assembly, binds to SD129.

The enzyme catalyses S-ubiquitinyl-[E2 ubiquitin-conjugating enzyme]-L-cysteine + [acceptor protein]-L-lysine = [E2 ubiquitin-conjugating enzyme]-L-cysteine + N(6)-ubiquitinyl-[acceptor protein]-L-lysine.. It participates in protein modification; protein ubiquitination. Functions as an E3 ubiquitin ligase. The protein is U-box domain-containing protein 45 (PUB45) of Arabidopsis thaliana (Mouse-ear cress).